The chain runs to 375 residues: 23S rRNA (uracil(747)-C(5))-methyltransferase RlmC (375 aa).

[4Fe-4S] cluster is bound by residues Cys3, Cys11, Cys14, and Cys87. Residues Gln212, Phe241, Glu262, and Asn307 each contribute to the S-adenosyl-L-methionine site. The Nucleophile role is filled by Cys334.

The protein belongs to the class I-like SAM-binding methyltransferase superfamily. RNA M5U methyltransferase family. RlmC subfamily.

The enzyme catalyses uridine(747) in 23S rRNA + S-adenosyl-L-methionine = 5-methyluridine(747) in 23S rRNA + S-adenosyl-L-homocysteine + H(+). Catalyzes the formation of 5-methyl-uridine at position 747 (m5U747) in 23S rRNA. The protein is 23S rRNA (uracil(747)-C(5))-methyltransferase RlmC of Xenorhabdus nematophila (strain ATCC 19061 / DSM 3370 / CCUG 14189 / LMG 1036 / NCIMB 9965 / AN6).